A 329-amino-acid chain; its full sequence is Meiotic drive suppressor wtf21 (329 aa).

The segment at 1 to 68 (MKNNYTSLKS…RENNPSRSTD (68 aa)) is disordered. Basic and acidic residues predominate over residues 19-30 (KTDHEIDLEKGP). Transmembrane regions (helical) follow at residues 73 to 95 (FLIK…ICYL), 110 to 132 (WTLF…YFYE), 165 to 182 (IIIW…FVYI), 192 to 214 (ALIC…VCIP), and 290 to 312 (GIAF…IRGA).

It belongs to the WTF family. As to quaternary structure, homomer. Interacts with other proteins that exhibit high sequence similarity.

The protein resides in the spore membrane. It localises to the vacuole membrane. Functionally, acts as a suppressor component of the dual wtf meiotic drive system, and can suppress but not confer meiotic drive by compatible poisons. Wtf meiotic drive systems promote unequal transmission of alleles from the parental zygote to progeny spores by encoding a poison and an antidote from the same locus; the poison is trans-acting and forms toxic aggregates in all spores within an ascus, wherease the antidote is spore-specific and targets aggregates for degradation by the vacuole. Meiotic drive by wtf systems therefore lead to poisoning of all progeny that do not inherit the dual poison/antidote allele, or express a compatible antidote. The protein is Meiotic drive suppressor wtf21 of Schizosaccharomyces pombe (strain 972 / ATCC 24843) (Fission yeast).